The chain runs to 213 residues: MKILITAFDPFGGEKKNPALEAIKLLPEQIKNHQITKLEIPTVFHKSSDKIADKLKAEHFDAVIAIGQAGGRYNLTPERVGINIDDARIPDNENNQPIDIPIQQDGAPAYFSNLPVKKMTQAIKDAGIPAALSNTAGTFVCNHILYQLGYLQATRYPDIKFGFIHVPFIPEQVVDKPDKPSMALSSIVTGLEAAIGAISEDNQDIKEALGEIQ.

Catalysis depends on residues E78, C141, and H165.

This sequence belongs to the peptidase C15 family. As to quaternary structure, homotetramer.

The protein resides in the cytoplasm. The enzyme catalyses Release of an N-terminal pyroglutamyl group from a polypeptide, the second amino acid generally not being Pro.. Removes 5-oxoproline from various penultimate amino acid residues except L-proline. The chain is Pyrrolidone-carboxylate peptidase from Staphylococcus carnosus (strain TM300).